We begin with the raw amino-acid sequence, 277 residues long: Putative acetylornithine deacetylase (277 aa).

It carries out the reaction N(2)-acetyl-L-ornithine + H2O = L-ornithine + acetate. It participates in amino-acid biosynthesis; L-arginine biosynthesis; L-ornithine from N(2)-acetyl-L-ornithine (linear): step 1/1. The chain is Putative acetylornithine deacetylase (argE) from Leptospira biflexa.